We begin with the raw amino-acid sequence, 294 residues long: UDP-3-O-acyl-N-acetylglucosamine deacetylase (294 aa).

Residues His75, His232, and Asp236 each contribute to the Zn(2+) site. Catalysis depends on His259, which acts as the Proton donor.

This sequence belongs to the LpxC family. Requires Zn(2+) as cofactor.

It carries out the reaction a UDP-3-O-[(3R)-3-hydroxyacyl]-N-acetyl-alpha-D-glucosamine + H2O = a UDP-3-O-[(3R)-3-hydroxyacyl]-alpha-D-glucosamine + acetate. Its pathway is glycolipid biosynthesis; lipid IV(A) biosynthesis; lipid IV(A) from (3R)-3-hydroxytetradecanoyl-[acyl-carrier-protein] and UDP-N-acetyl-alpha-D-glucosamine: step 2/6. Its function is as follows. Catalyzes the hydrolysis of UDP-3-O-myristoyl-N-acetylglucosamine to form UDP-3-O-myristoylglucosamine and acetate, the committed step in lipid A biosynthesis. The chain is UDP-3-O-acyl-N-acetylglucosamine deacetylase from Sulfurimonas denitrificans (strain ATCC 33889 / DSM 1251) (Thiomicrospira denitrificans (strain ATCC 33889 / DSM 1251)).